The following is a 132-amino-acid chain: L-ectoine synthase (132 aa).

This sequence belongs to the ectoine synthase family.

It carries out the reaction (2S)-4-acetamido-2-aminobutanoate = L-ectoine + H2O. Its pathway is amine and polyamine biosynthesis; ectoine biosynthesis; L-ectoine from L-aspartate 4-semialdehyde: step 3/3. In terms of biological role, catalyzes the circularization of gamma-N-acetyl-alpha,gamma-diaminobutyric acid (ADABA) to ectoine (1,4,5,6-tetrahydro-2-methyl-4-pyrimidine carboxylic acid), which is an excellent osmoprotectant. This Streptomyces anulatus (Streptomyces chrysomallus) protein is L-ectoine synthase (ectC).